Consider the following 143-residue polypeptide: AP-4 complex subunit sigma (143 aa).

Belongs to the adaptor complexes small subunit family. As to quaternary structure, adaptor protein complex 4 (AP-4) is a heterotetramer composed of two large adaptins (epsilon-type subunit and beta-type subunit), a medium adaptin (mu-type subunit) and a small adaptin (sigma-type subunit). Interacts with EHD2.

It localises to the golgi apparatus. Its subcellular location is the trans-Golgi network. It is found in the membrane. The protein localises to the coated pit. In terms of biological role, subunit of novel type of clathrin- or non-clathrin-associated protein coat involved in targeting proteins from the trans-Golgi network (TGN) to the endosomal-lysosomal system. The chain is AP-4 complex subunit sigma from Arabidopsis thaliana (Mouse-ear cress).